The chain runs to 685 residues: uncharacterized protein (685 aa).

Disordered stretches follow at residues 502 to 538 (NLNQ…SLNK) and 635 to 685 (RSKR…IHNA). Residues 518-538 (SSENMTKFPSSRGKSTVSLNK) show a composition bias toward polar residues. Basic residues predominate over residues 675-685 (KLKKSLIIHNA).

This is an uncharacterized protein from Homo sapiens (Human).